Here is a 105-residue protein sequence, read N- to C-terminus: Chloroacetanilide N-alkylformylase 2, ferredoxin component (105 aa).

The 2Fe-2S ferredoxin-type domain maps to proline 2 to aspartate 105. [2Fe-2S] cluster contacts are provided by cysteine 40, cysteine 46, cysteine 49, and cysteine 86.

The protein belongs to the adrenodoxin/putidaredoxin family. In terms of assembly, the chloroacetanilide N-alkylformylase multicomponent enzyme system is composed of an oxygenase component (CndA) and an electron transfer component formed by a ferredoxin reductase (CndC1) and a ferredoxin (CndB1). In vitro, chloroacetanilide N-alkylformylase assays in which CndB1 is substituted for CndB2 demonstrate that the two enzymes possess nearly identical activities. [2Fe-2S] cluster is required as a cofactor.

In terms of biological role, component of the chloroacetanilide N-alkylformylase multicomponent enzyme system involved in the degradation of chloroacetanilide herbicides (N-alkoxyalkyl-N-chloroacetyl-substituted aniline derivatives). In vitro, functions as an intermediate electron transfer protein. The protein is Chloroacetanilide N-alkylformylase 2, ferredoxin component of Rhizorhabdus wittichii (strain DC-6 / KACC 16600) (Sphingomonas wittichii).